Consider the following 206-residue polypeptide: GTP cyclohydrolase 1 (206 aa).

Cys-95, His-98, and Cys-166 together coordinate Zn(2+).

This sequence belongs to the GTP cyclohydrolase I family. In terms of assembly, toroid-shaped homodecamer, composed of two pentamers of five dimers.

The enzyme catalyses GTP + H2O = 7,8-dihydroneopterin 3'-triphosphate + formate + H(+). The protein operates within cofactor biosynthesis; 7,8-dihydroneopterin triphosphate biosynthesis; 7,8-dihydroneopterin triphosphate from GTP: step 1/1. This chain is GTP cyclohydrolase 1, found in Bartonella henselae (strain ATCC 49882 / DSM 28221 / CCUG 30454 / Houston 1) (Rochalimaea henselae).